A 221-amino-acid chain; its full sequence is MGLDNFTAPSTGTTPAGSPFLRMDQSSAGKYPDLPPSISDTTNFRIKKIMDDAKMLEEEIKFRKSIYKKYGRFSSVTDGIEYTLIMADIVLGTVATAIPGVGSLVSAATFSGVGLISGVAKMIQAKLMAKKMKNYRLAIVATTTLANLNRKISKAISDGQITHEEFEDIQNTVVEWKNGLQVVGKQPTLSRETIELLSQQATEKAQKDLLDQLKNMNLGKM.

Residues 1–22 (MGLDNFTAPSTGTTPAGSPFLR) form a disordered region. A compositionally biased stretch (polar residues) spans 7-16 (TAPSTGTTPA).

The protein belongs to the IIV-6 259R family.

This is an uncharacterized protein from Invertebrate iridescent virus 3 (IIV-3).